A 415-amino-acid polypeptide reads, in one-letter code: Arrestin domain-containing protein 4 (415 aa).

Short sequence motifs (PPxY motif) lie at residues 347 to 350 and 392 to 395; these read PPNY and PPLY.

This sequence belongs to the arrestin family. Interacts with ADRB2. Interacts (via PPxY motifs) with ITCH, NEDD4L and WWP2. Interacts with AVPR2. Identified in a complex containing at least ARRDC4, AVPR2 and HGS. Interacts with SLC11A2; controls the incorporation of SLC11A2 into extracellular vesicles through an ubiquitination-dependent mechanism. Interacts with TRIM65.

Its subcellular location is the early endosome. The protein localises to the cell membrane. The protein resides in the cytoplasmic vesicle. Functionally, functions as an adapter recruiting ubiquitin-protein ligases to their specific substrates. Plays a role in endocytosis of activated G protein-coupled receptors (GPCRs). Through an ubiquitination-dependent mechanism also plays a role in the incorporation of SLC11A2 into extracellular vesicles. May play a role in glucose uptake. Participates in innate immune response by promoting IFIH1/MDA5 activation through interaction with TRIM65. This is Arrestin domain-containing protein 4 from Mus musculus (Mouse).